The sequence spans 243 residues: MDVHDLTRAPPEYLEVVWVTDVCKLVMAVGWLSNYIGMIAKSIKEQTYSMALMPLCCNFAWEFTYFFIYPYKVPMERNIHTLAFLLNCGVMYTAVRYGAREWGHAPLVQRNLPVIFVVCIACWVSAHVAFAEQYGPSLAQAVSGFACQILLSAGGTCQLLCRGHSRGASYKLWLARFMGSFALILPNMLRYKYWRDDHQYIGSPLYIWFLGMFLFLDGSYGFVLWYVRRHEREQVLVAKPKVQ.

The next 7 helical transmembrane spans lie at 16-36, 50-70, 79-99, 112-132, 141-161, 172-189, and 207-227; these read VVWV…SNYI, MALM…FIYP, IHTL…RYGA, LPVI…AFAE, AVSG…QLLC, LWLA…PNML, and IWFL…LWYV.

It belongs to the paxB family.

It localises to the membrane. It functions in the pathway secondary metabolite biosynthesis; terpenoid biosynthesis. Its function is as follows. Terpene cyclase; part of the gene cluster that mediates the biosynthesis of the diterpenoid pyrones subglutinols A and B. The first step of the pathway is the synthesis of the alpha-pyrone moiety by the polyketide synthase dpasA via condensation of one acetyl-CoA starter unit with 3 malonyl-CoA units and 2 methylations. The alpha-pyrone is then combined with geranylgeranyl pyrophosphate (GGPP) formed by the GGPP synthase dpasD through the action of the prenyltransferase dpasC to yield a linear alpha-pyrone diterpenoid. Subsequent steps in the diterpenoid pyrone biosynthetic pathway involve the decalin core formation, which is initiated by the epoxidation of the C10-C11 olefin by the FAD-dependent oxidoreductase dpasE, and is followed by a cyclization cascade catalyzed by the terpene cyclase dpasB. The FAD-linked oxidoreductase dpasF is then involved in tetrahydrofuran (THF) ring formation at the C5 unit to complete the formation of subglutinols A and B. DpasF possesses also an additional catalytic ability of multi-step oxidations to generate a new DDP analog with an enone system at the C5 named FDDP A. The chain is Terpene cyclase dpasB from Apiospora sacchari (Arthrinium sacchari).